A 184-amino-acid polypeptide reads, in one-letter code: Photosystem I assembly protein Ycf4 (184 aa).

Helical transmembrane passes span 22–42 (FCWAIILFLGSLGFLLIGISS) and 57–77 (IIFFPQGLVMSFYGLAGLFIS).

Belongs to the Ycf4 family.

Its subcellular location is the plastid. It localises to the chloroplast thylakoid membrane. Seems to be required for the assembly of the photosystem I complex. In Populus alba (White poplar), this protein is Photosystem I assembly protein Ycf4.